Reading from the N-terminus, the 414-residue chain is Lipoyl synthase, mitochondrial (414 aa).

Residues 1 to 31 constitute a mitochondrion transit peptide; it reads MAVSTSHFRSLCASRPLSRTAIVGHISCRSY. The tract at residues 31-51 is disordered; the sequence is YATTEPSPSATSTSTTTTARR. Residues 32 to 48 are compositionally biased toward low complexity; sequence ATTEPSPSATSTSTTTT. The [4Fe-4S] cluster site is built by C131, C136, C142, C162, C166, C169, and S377. In terms of domain architecture, Radical SAM core spans 145–366; it reads GSDKSAATAT…RQRALDMGFL (222 aa).

It belongs to the radical SAM superfamily. Lipoyl synthase family. It depends on [4Fe-4S] cluster as a cofactor.

It is found in the mitochondrion. It carries out the reaction [[Fe-S] cluster scaffold protein carrying a second [4Fe-4S](2+) cluster] + N(6)-octanoyl-L-lysyl-[protein] + 2 oxidized [2Fe-2S]-[ferredoxin] + 2 S-adenosyl-L-methionine + 4 H(+) = [[Fe-S] cluster scaffold protein] + N(6)-[(R)-dihydrolipoyl]-L-lysyl-[protein] + 4 Fe(3+) + 2 hydrogen sulfide + 2 5'-deoxyadenosine + 2 L-methionine + 2 reduced [2Fe-2S]-[ferredoxin]. Its pathway is protein modification; protein lipoylation via endogenous pathway; protein N(6)-(lipoyl)lysine from octanoyl-[acyl-carrier-protein]: step 2/2. Catalyzes the radical-mediated insertion of two sulfur atoms into the C-6 and C-8 positions of the octanoyl moiety bound to the lipoyl domains of lipoate-dependent enzymes, thereby converting the octanoylated domains into lipoylated derivatives. The sequence is that of Lipoyl synthase, mitochondrial from Aspergillus fumigatus (strain CBS 144.89 / FGSC A1163 / CEA10) (Neosartorya fumigata).